A 137-amino-acid polypeptide reads, in one-letter code: Small ribosomal subunit protein uS19 (137 aa).

This sequence belongs to the universal ribosomal protein uS19 family.

In terms of biological role, protein S19 forms a complex with S13 that binds strongly to the 16S ribosomal RNA. The chain is Small ribosomal subunit protein uS19 from Methanospirillum hungatei JF-1 (strain ATCC 27890 / DSM 864 / NBRC 100397 / JF-1).